The primary structure comprises 304 residues: L-lactate dehydrogenase (304 aa).

NAD(+)-binding positions include Val-11, Asp-32, Arg-37, and 76 to 77 (GA). Residues Gln-79, Arg-85, and 117 to 120 (NPVD) each bind substrate. Ser-138 provides a ligand contact to NAD(+). 143–146 (DSAR) serves as a coordination point for substrate. Arg-148 and His-163 together coordinate beta-D-fructose 1,6-bisphosphate. The Proton acceptor role is filled by His-170. Thr-225 lines the substrate pocket.

Belongs to the LDH/MDH superfamily. LDH family. Homotetramer.

It is found in the cytoplasm. It carries out the reaction (S)-lactate + NAD(+) = pyruvate + NADH + H(+). It participates in fermentation; pyruvate fermentation to lactate; (S)-lactate from pyruvate: step 1/1. Allosterically activated by fructose 1,6-bisphosphate (FBP). Its function is as follows. Catalyzes the conversion of lactate to pyruvate. This is L-lactate dehydrogenase from Deinococcus radiodurans (strain ATCC 13939 / DSM 20539 / JCM 16871 / CCUG 27074 / LMG 4051 / NBRC 15346 / NCIMB 9279 / VKM B-1422 / R1).